The primary structure comprises 533 residues: Sterol 26-hydroxylase, mitochondrial (533 aa).

A mitochondrion-targeting transit peptide spans 1-32 (MAVLSRMRLRWALLDTRVMGHGLCPQGARAKA). Residues 38 to 58 (LRDHESTEGPGTGQDRPRLRS) are disordered. Residues K142 and K375 each carry the N6-acetyllysine modification. The segment at 386 to 400 (PLLKAVIKETLRLYP) is sterol-binding. C479 lines the heme pocket. Residues K512 and K523 each carry the N6-acetyllysine modification.

Belongs to the cytochrome P450 family. Interacts with HSP70; this interaction is required for initial targeting to mitochondria. It depends on heme as a cofactor. As to expression, expressed in liver, kidney and ovary.

Its subcellular location is the mitochondrion inner membrane. The catalysed reaction is 5beta-cholestane-3alpha,7alpha,12alpha-triol + 6 reduced [adrenodoxin] + 3 O2 + 5 H(+) = (25R)-3alpha,7alpha,12alpha-trihydroxy-5beta-cholestan-26-oate + 6 oxidized [adrenodoxin] + 4 H2O. It catalyses the reaction cholestanol + 2 reduced [adrenodoxin] + O2 + 2 H(+) = (25R)-26-hydroxycholestanol + 2 oxidized [adrenodoxin] + H2O. The enzyme catalyses (25R)-3beta-hydroxycholest-5-en-7-one-26-al + 2 reduced [adrenodoxin] + O2 + H(+) = (25R)-3beta-hydroxycholest-5-en-7-one-26-oate + 2 oxidized [adrenodoxin] + H2O. It carries out the reaction (25R)-3beta,26-dihydroxycholest-5-en-7-one + 2 reduced [adrenodoxin] + O2 + 2 H(+) = (25R)-3beta-hydroxycholest-5-en-7-one-26-al + 2 oxidized [adrenodoxin] + 2 H2O. The catalysed reaction is 7-oxocholesterol + 2 reduced [adrenodoxin] + O2 + 2 H(+) = (25R)-3beta,26-dihydroxycholest-5-en-7-one + 2 oxidized [adrenodoxin] + H2O. It catalyses the reaction calciol + 2 reduced [adrenodoxin] + O2 + 2 H(+) = calcidiol + 2 oxidized [adrenodoxin] + H2O. The enzyme catalyses (25R)-5beta-cholestane-3alpha,7alpha,12alpha,26-tetrol + 2 reduced [adrenodoxin] + O2 + 2 H(+) = (25R)-3alpha,7alpha,12alpha-trihydroxy-5beta-cholestan-26-al + 2 oxidized [adrenodoxin] + 2 H2O. It carries out the reaction 2 reduced [adrenodoxin] + cholesterol + O2 + 2 H(+) = (25R)-cholest-5-ene-3beta,26-diol + 2 oxidized [adrenodoxin] + H2O. The catalysed reaction is (25R)-3beta,4beta-dihydroxycholest-5-en-26-al + 2 reduced [adrenodoxin] + O2 + H(+) = (25R)-3beta,4beta-dihydroxycholest-5-en-26-oate + 2 oxidized [adrenodoxin] + H2O. It catalyses the reaction (25R)-4beta,26-dihydroxycholesterol + 2 reduced [adrenodoxin] + O2 + 2 H(+) = (25R)-3beta,4beta-dihydroxycholest-5-en-26-al + 2 oxidized [adrenodoxin] + 2 H2O. The enzyme catalyses 4beta-hydroxycholesterol + 2 reduced [adrenodoxin] + O2 + 2 H(+) = (25R)-4beta,26-dihydroxycholesterol + 2 oxidized [adrenodoxin] + H2O. It carries out the reaction (25R)-3beta-hydroxy-5-cholesten-26-al + 2 reduced [adrenodoxin] + O2 + H(+) = (25R)-3beta-hydroxy-5-cholestenoate + 2 oxidized [adrenodoxin] + H2O. The catalysed reaction is (25R)-cholest-5-ene-3beta,26-diol + 2 reduced [adrenodoxin] + O2 + 2 H(+) = (25R)-3beta-hydroxy-5-cholesten-26-al + 2 oxidized [adrenodoxin] + 2 H2O. It catalyses the reaction (25R)-3alpha,7alpha,12alpha-trihydroxy-5beta-cholestan-26-al + 2 reduced [adrenodoxin] + O2 + H(+) = (25R)-3alpha,7alpha,12alpha-trihydroxy-5beta-cholestan-26-oate + 2 oxidized [adrenodoxin] + H2O. The enzyme catalyses 5beta-cholestane-3alpha,7alpha,12alpha-triol + 2 reduced [adrenodoxin] + O2 + 2 H(+) = (25R)-5beta-cholestane-3alpha,7alpha,12alpha,26-tetrol + 2 oxidized [adrenodoxin] + H2O. Its pathway is hormone biosynthesis; cholecalciferol biosynthesis. The protein operates within steroid metabolism; cholesterol degradation. It functions in the pathway lipid metabolism; bile acid biosynthesis. Functionally, cytochrome P450 monooxygenase that catalyzes regio- and stereospecific hydroxylation of cholesterol and its derivatives. Hydroxylates (with R stereochemistry) the terminal methyl group of cholesterol side-chain in a three step reaction to yield at first a C26 alcohol, then a C26 aldehyde and finally a C26 acid. Regulates cholesterol homeostasis by catalyzing the conversion of excess cholesterol to bile acids via both the 'neutral' (classic) and the 'acid' (alternative) pathways. May also regulate cholesterol homeostasis via generation of active oxysterols, which act as ligands for NR1H2 and NR1H3 nuclear receptors, modulating the transcription of genes involved in lipid metabolism. Plays a role in cholestanol metabolism in the cerebellum. Similarly to cholesterol, hydroxylates cholestanol and may facilitate sterol diffusion through the blood-brain barrier to the systemic circulation for further degradation. Also hydroxylates retinal 7-ketocholesterol, a noxious oxysterol with pro-inflammatory and pro-apoptotic effects, and may play a role in its elimination from the retinal pigment epithelium. May play a redundant role in vitamin D biosynthesis. Catalyzes 25-hydroxylation of vitamin D3 that is required for its conversion to a functionally active form. This is Sterol 26-hydroxylase, mitochondrial (Cyp27a1) from Rattus norvegicus (Rat).